The primary structure comprises 271 residues: Carboxy-terminal domain RNA polymerase II polypeptide A small phosphatase 2 (271 aa).

Serine 5 is subject to Phosphoserine. One can recognise an FCP1 homology domain in the interval 97–255 (EDQGRICVVI…LNLIPIFEEL (159 aa)). Aspartate 107 serves as the catalytic 4-aspartylphosphate intermediate. Aspartate 107, aspartate 109, and asparagine 218 together coordinate Mg(2+). The active-site Proton donor is the aspartate 109.

In terms of assembly, monomer. Interacts with REST. The cofactor is Mg(2+). Expression is restricted to non-neuronal tissues. Highest expression in pancreas and lowest in liver.

Its subcellular location is the nucleus. The enzyme catalyses O-phospho-L-seryl-[protein] + H2O = L-seryl-[protein] + phosphate. It carries out the reaction O-phospho-L-threonyl-[protein] + H2O = L-threonyl-[protein] + phosphate. Its function is as follows. Preferentially catalyzes the dephosphorylation of 'Ser-5' within the tandem 7 residue repeats in the C-terminal domain (CTD) of the largest RNA polymerase II subunit POLR2A. Negatively regulates RNA polymerase II transcription, possibly by controlling the transition from initiation/capping to processive transcript elongation. Recruited by REST to neuronal genes that contain RE-1 elements, leading to neuronal gene silencing in non-neuronal cells. May contribute to the development of sarcomas. In Homo sapiens (Human), this protein is Carboxy-terminal domain RNA polymerase II polypeptide A small phosphatase 2 (CTDSP2).